Here is a 340-residue protein sequence, read N- to C-terminus: MLFDAVLLLSFGGPEGPQEVRPFLENVTRGRGIPPERLDEVAEHYFHFGGVSPINGINRALVDQISRQLESAGHPLPVFFGNRNWHPMVEDTVAEMRDKGIRRAAVFTTSAWGGYSGCKQYVEDIARARAAVGDGAPELVKLRQYFDHPSLVQLYAEAVSAAMSSLRGEARLVFTAHSIPLAADRRHGPELYSRQVHYLAQLVAAATGHQDYDVVWQSRSGPPQVPWLEPDIVDHLAALKDRGIRSVAVAPIGFVSDHLEVVWDLDNEAREYAQEHDIELVRAATPGADERFARLAVDLITEVVEGRPALRASGVNPVPGYGFSVNGALCSPLCCGVQED.

Residues Ser52 and Tyr121 each coordinate Fe-coproporphyrin III. The Fe(2+) site is built by His177 and Glu260.

This sequence belongs to the ferrochelatase family.

The protein resides in the cytoplasm. The catalysed reaction is Fe-coproporphyrin III + 2 H(+) = coproporphyrin III + Fe(2+). The protein operates within porphyrin-containing compound metabolism; protoheme biosynthesis. Its function is as follows. Involved in coproporphyrin-dependent heme b biosynthesis. Catalyzes the insertion of ferrous iron into coproporphyrin III to form Fe-coproporphyrin III. The polypeptide is Coproporphyrin III ferrochelatase (Mycobacteroides abscessus (strain ATCC 19977 / DSM 44196 / CCUG 20993 / CIP 104536 / JCM 13569 / NCTC 13031 / TMC 1543 / L948) (Mycobacterium abscessus)).